The chain runs to 112 residues: ATP synthase subunit c (112 aa).

2 consecutive transmembrane segments (helical) span residues 36 to 56 and 81 to 101; these read FSVL…AIGM and MFIA…IALI.

Belongs to the ATPase C chain family. As to quaternary structure, F-type ATPases have 2 components, F(1) - the catalytic core - and F(0) - the membrane proton channel. F(1) has five subunits: alpha(3), beta(3), gamma(1), delta(1), epsilon(1). F(0) has three main subunits: a(1), b(2) and c(10-14). The alpha and beta chains form an alternating ring which encloses part of the gamma chain. F(1) is attached to F(0) by a central stalk formed by the gamma and epsilon chains, while a peripheral stalk is formed by the delta and b chains.

It is found in the cell inner membrane. Functionally, f(1)F(0) ATP synthase produces ATP from ADP in the presence of a proton or sodium gradient. F-type ATPases consist of two structural domains, F(1) containing the extramembraneous catalytic core and F(0) containing the membrane proton channel, linked together by a central stalk and a peripheral stalk. During catalysis, ATP synthesis in the catalytic domain of F(1) is coupled via a rotary mechanism of the central stalk subunits to proton translocation. In Campylobacter jejuni subsp. jejuni serotype O:2 (strain ATCC 700819 / NCTC 11168), this protein is ATP synthase subunit c.